Here is a 298-residue protein sequence, read N- to C-terminus: MTDAAVSFAKDFLAGGVAAAISKTAVAPIERVKLLLQVQHASKQITADKQYKGIIDCVVRIPKEQGVLSFWRGNLANVIRYFPTQALNFAFKDKYKQIFLGGVDKRTQFWRYFAGNLASGGAAGATSLCFVYPLDFARTRLAADVGKAGAEREFKGLGDCLVKIYKSDGIKGLYQGFNVSVQGIIIYRAAYFGIYDTAKGMLPDPKNTHIFISWMIAQSVTAVAGLTSYPFDTVRRRMMMQSGRKGTDIMYTGTLDCWRKIARDEGGKAFFKGAWSNVLRGMGGAFVLVLYDEIKKYT.

Position 1 is an N-acetylmethionine (Met1). Topologically, residues 1–7 (MTDAAVS) are mitochondrial intermembrane. Thr2 carries the post-translational modification N-acetylthreonine; in ADP/ATP translocase 2, N-terminally processed. A Solcar 1 repeat occupies 6–98 (VSFAKDFLAG…FAFKDKYKQI (93 aa)). Ser7 bears the Phosphoserine mark. A helical membrane pass occupies residues 8–37 (FAKDFLAGGVAAAISKTAVAPIERVKLLLQ). Lys23 is subject to N6-malonyllysine. Over 38-74 (VQHASKQITADKQYKGIIDCVVRIPKEQGVLSFWRGN) the chain is Mitochondrial matrix. An N6-succinyllysine modification is found at Lys43. Lys52 is modified (N6,N6,N6-trimethyllysine; alternate). N6,N6-dimethyllysine; alternate is present on Lys52. Lys52 bears the N6-methyllysine; alternate mark. The chain crosses the membrane as a helical span at residues 75–99 (LANVIRYFPTQALNFAFKDKYKQIF). ADP-binding residues include Arg80 and Lys92. An N6-malonyllysine mark is found at Lys92 and Lys96. Residues 100 to 109 (LGGVDKRTQF) lie on the Mitochondrial intermembrane side of the membrane. At Lys105 the chain carries N6-acetyllysine; alternate. N6-succinyllysine; alternate is present on Lys105. Residues 110–130 (WRYFAGNLASGGAAGATSLCF) form a helical membrane-spanning segment. Solcar repeat units follow at residues 111–201 (RYFA…AKGM) and 212–297 (ISWM…IKKY). Topologically, residues 131–178 (VYPLDFARTRLAADVGKAGAEREFKGLGDCLVKIYKSDGIKGLYQGFN) are mitochondrial matrix. Lys147 is modified (N6-methyllysine; alternate). N6-acetyllysine; alternate occurs at positions 147 and 155. An N6-succinyllysine; alternate mark is found at Lys147 and Lys155. Lys147 bears the N6-malonyllysine; alternate mark. 2 positions are modified to N6-acetyllysine: Lys163 and Lys166. The helical transmembrane segment at 179–199 (VSVQGIIIYRAAYFGIYDTAK) threads the bilayer. Topologically, residues 200 to 210 (GMLPDPKNTHI) are mitochondrial intermembrane. The helical transmembrane segment at 211–231 (FISWMIAQSVTAVAGLTSYPF) threads the bilayer. Topologically, residues 232-273 (DTVRRRMMMQSGRKGTDIMYTGTLDCWRKIARDEGGKAFFKG) are mitochondrial matrix. Arg235 provides a ligand contact to ADP. The important for transport activity stretch occupies residues 235–240 (RRRMMM). The Nucleotide carrier signature motif signature appears at 235 to 240 (RRRMMM). Residue Lys268 is modified to N6-acetyllysine; alternate. The residue at position 268 (Lys268) is an N6-succinyllysine; alternate. Residues 274–291 (AWSNVLRGMGGAFVLVLY) form a helical membrane-spanning segment. Residues 292-298 (DEIKKYT) lie on the Mitochondrial intermembrane side of the membrane.

Belongs to the mitochondrial carrier (TC 2.A.29) family. In terms of assembly, monomer. Component of the MMXD complex, which includes CIAO1, ERCC2, CIAO2B, MMS19 and SLC25A5/ANT2. Interacts with AK4. Interacts with TIMM44; leading to inhibit the presequence translocase TIMM23, thereby promoting stabilization of PINK1. Post-translationally, trimethylated by ANTKMT at Lys-52. In terms of tissue distribution, present in kidney, brain, heart, liver and skeletal muscle.

Its subcellular location is the mitochondrion inner membrane. It is found in the membrane. It carries out the reaction ADP(in) + ATP(out) = ADP(out) + ATP(in). The enzyme catalyses H(+)(in) = H(+)(out). Its activity is regulated as follows. The matrix-open state (m-state) is inhibited by the membrane-permeable bongkrekic acid (BKA). The cytoplasmic-open state (c-state) is inhibited by the membrane-impermeable toxic inhibitor carboxyatractyloside (CATR). Proton transporter activity is inhibited by ADP:ATP antiporter activity. Functionally, ADP:ATP antiporter that mediates import of ADP into the mitochondrial matrix for ATP synthesis, and export of ATP out to fuel the cell. Cycles between the cytoplasmic-open state (c-state) and the matrix-open state (m-state): operates by the alternating access mechanism with a single substrate-binding site intermittently exposed to either the cytosolic (c-state) or matrix (m-state) side of the inner mitochondrial membrane. In addition to its ADP:ATP antiporter activity, also involved in mitochondrial uncoupling and mitochondrial permeability transition pore (mPTP) activity. Plays a role in mitochondrial uncoupling by acting as a proton transporter: proton transport uncouples the proton flows via the electron transport chain and ATP synthase to reduce the efficiency of ATP production and cause mitochondrial thermogenesis. Proton transporter activity is inhibited by ADP:ATP antiporter activity, suggesting that SLC25A5/ANT2 acts as a master regulator of mitochondrial energy output by maintaining a delicate balance between ATP production (ADP:ATP antiporter activity) and thermogenesis (proton transporter activity). Proton transporter activity requires free fatty acids as cofactor, but does not transport it. Probably mediates mitochondrial uncoupling in tissues that do not express UCP1. Also plays a key role in mPTP opening, a non-specific pore that enables free passage of the mitochondrial membranes to solutes of up to 1.5 kDa, and which contributes to cell death. It is however unclear if SLC25A5/ANT2 constitutes a pore-forming component of mPTP or regulates it. Acts as a regulator of mitophagy independently of ADP:ATP antiporter activity: promotes mitophagy via interaction with TIMM44, leading to inhibit the presequence translocase TIMM23, thereby promoting stabilization of PINK1. As part of the mitotic spindle-associated MMXD complex it may play a role in chromosome segregation. The sequence is that of ADP/ATP translocase 2 from Rattus norvegicus (Rat).